The following is a 704-amino-acid chain: Phytyl ester synthase 1, chloroplastic (704 aa).

The N-terminal 27 residues, 1-27 (MATCSSSLLVLPNLRLSSNQRRNFKVR), are a transit peptide targeting the chloroplast.

This sequence belongs to the diacylglycerol acyltransferase family. As to quaternary structure, interacts with PGM48. Mostly expressed in flowers (e.g. sepals, petals and stamen).

The protein resides in the plastid. It is found in the chloroplast. The protein localises to the plastoglobule. The catalysed reaction is a 1,2-diacyl-3-O-(beta-D-galactosyl)-sn-glycerol + a 1,2-diacylglycerol = an acyl-3-O-(beta-D-galactosyl)-sn-glycerol + a triacylglycerol. It catalyses the reaction a 1,2-diacylglycerol + a fatty acyl-CoA = a triacylglycerol + CoA. It carries out the reaction a fatty acyl-[ACP] + a 1,2-diacylglycerol = a triacylglycerol + holo-[ACP]. The enzyme catalyses phytol + a fatty acyl-CoA = a fatty acid phytyl ester + CoA. The catalysed reaction is phytol + tetradecanoyl-CoA = tetradecanoate phytyl ester + CoA. It catalyses the reaction a 1,3-diacylglycerol + a fatty acyl-CoA = a triacylglycerol + CoA. It carries out the reaction 1,2-dihexanoylglycerol + tetradecanoyl-CoA = 1,2-dihexanoyl-3-tetradecanoylglycerol + CoA. The enzyme catalyses 1,2-dihexanoylglycerol + hexadecanoyl-CoA = 1,2-dihexanoyl-3-hexadecanoylglycerol + CoA. The catalysed reaction is 1,2-dihexanoylglycerol + octadecanoyl-CoA = 1,2-dihexanoyl-3-octadecanoylglycerol + CoA. It catalyses the reaction (7Z,10Z,13Z)-hexadecatrienoyl-CoA + 1,2-dihexanoylglycerol = 1,2-dihexanoyl-3-(7Z,10Z,13Z-hexadecatrienoyl)-glycerol + CoA. It carries out the reaction 1,2-dihexanoylglycerol + (9Z)-octadecenoyl-CoA = 1,2-dihexanoyl-3-(9Z-octadecenoyl)-glycerol + CoA. The enzyme catalyses 1,2-dihexanoylglycerol + (9Z,12Z,15Z)-octadecatrienoyl-CoA = 1,2-dihexanoyl-3-(9Z,12Z,15Z-octadecatrienoyl)-glycerol + CoA. The catalysed reaction is phytol + decanoyl-CoA = decanoate phytyl ester + CoA. It catalyses the reaction (7Z,10Z,13Z)-hexadecatrienoyl-CoA + phytol = (7Z,10Z,13Z)-hexadecatrienoate phytyl ester + CoA. It carries out the reaction phytol + dodecanoyl-CoA = dodecanoate phytyl ester + CoA. In terms of biological role, acyltransferase involved in fatty acid phytyl ester synthesis in chloroplasts, a process required for the maintenance of the photosynthetic membrane integrity during abiotic stress and senescence. Exhibits phytyl ester synthesis and diacylglycerol acyltransferase activities with broad substrate specificities, and can employ acyl-CoAs, acyl carrier proteins, and galactolipids as acyl donors. This chain is Phytyl ester synthase 1, chloroplastic, found in Arabidopsis thaliana (Mouse-ear cress).